The primary structure comprises 84 residues: Acyl carrier protein (84 aa).

Residues 6-81 enclose the Carrier domain; that stretch reads EEILTGLAEI…DAVDYIANAT (76 aa). O-(pantetheine 4'-phosphoryl)serine is present on S41.

Belongs to the acyl carrier protein (ACP) family. 4'-phosphopantetheine is transferred from CoA to a specific serine of apo-ACP by AcpS. This modification is essential for activity because fatty acids are bound in thioester linkage to the sulfhydryl of the prosthetic group.

Its subcellular location is the cytoplasm. The protein operates within lipid metabolism; fatty acid biosynthesis. Functionally, carrier of the growing fatty acid chain in fatty acid biosynthesis. In Acidothermus cellulolyticus (strain ATCC 43068 / DSM 8971 / 11B), this protein is Acyl carrier protein.